A 552-amino-acid chain; its full sequence is C-type lectin receptor-like tyrosine-protein kinase At1g52310 (552 aa).

The first 27 residues, 1–27 (MELKWVSCRKQSLFLISCLALLCLASL), serve as a signal peptide directing secretion. Residues 28–201 (DTISCESTQN…DIKCRNCHKY (174 aa)) are Extracellular-facing. 9 N-linked (GlcNAc...) asparagine glycosylation sites follow: asparagine 37, asparagine 59, asparagine 69, asparagine 106, asparagine 118, asparagine 137, asparagine 154, asparagine 169, and asparagine 180. Positions 59–188 (NQTKCYAYFK…CNASHAFVCA (130 aa)) constitute a C-type lectin domain. 2 disulfide bridges follow: cysteine 80-cysteine 187 and cysteine 164-cysteine 179. A helical membrane pass occupies residues 202–222 (LVILAVVSGLILFTTFAIILW). Residues 223-552 (LLVYKRSKKR…QQLVQPLEVK (330 aa)) lie on the Cytoplasmic side of the membrane. One can recognise a Protein kinase domain in the interval 268–546 (SEANRLAGDA…HVVHQLQQLV (279 aa)). Residues 274 to 282 (AGDAKTGGT) and lysine 296 contribute to the ATP site. Residue aspartate 394 is the Proton acceptor of the active site.

It belongs to the protein kinase superfamily. Tyr protein kinase family.

The protein resides in the cell membrane. The enzyme catalyses L-tyrosyl-[protein] + ATP = O-phospho-L-tyrosyl-[protein] + ADP + H(+). This Arabidopsis thaliana (Mouse-ear cress) protein is C-type lectin receptor-like tyrosine-protein kinase At1g52310.